A 63-amino-acid polypeptide reads, in one-letter code: DNA-directed RNA polymerase subunit omega (63 aa).

The protein belongs to the RNA polymerase subunit omega family. As to quaternary structure, the RNAP catalytic core consists of 2 alpha, 1 beta, 1 beta' and 1 omega subunit. When a sigma factor is associated with the core the holoenzyme is formed, which can initiate transcription.

The catalysed reaction is RNA(n) + a ribonucleoside 5'-triphosphate = RNA(n+1) + diphosphate. Functionally, promotes RNA polymerase assembly. Latches the N- and C-terminal regions of the beta' subunit thereby facilitating its interaction with the beta and alpha subunits. The sequence is that of DNA-directed RNA polymerase subunit omega from Blochmanniella pennsylvanica (strain BPEN).